The sequence spans 248 residues: Ribosomal RNA small subunit methyltransferase J (248 aa).

S-adenosyl-L-methionine-binding positions include 98–99, 114–115, 150–151, and aspartate 168; these read RD, ER, and SS.

This sequence belongs to the methyltransferase superfamily. RsmJ family.

It is found in the cytoplasm. The catalysed reaction is guanosine(1516) in 16S rRNA + S-adenosyl-L-methionine = N(2)-methylguanosine(1516) in 16S rRNA + S-adenosyl-L-homocysteine + H(+). Functionally, specifically methylates the guanosine in position 1516 of 16S rRNA. This Shewanella baltica (strain OS223) protein is Ribosomal RNA small subunit methyltransferase J.